The primary structure comprises 107 residues: Glutaredoxin 4 (107 aa).

Residues 4–106 (IDKIKQQINE…TLLKETATKH (103 aa)) enclose the Glutaredoxin domain. Lys-21 is a glutathione binding site. [2Fe-2S] cluster is bound at residue Cys-29. Glutathione-binding positions include Arg-58, Phe-70, and 83–84 (CD).

It belongs to the glutaredoxin family. Monothiol subfamily. In terms of assembly, homodimer.

The protein resides in the cytoplasm. Its function is as follows. Monothiol glutaredoxin involved in the biogenesis of iron-sulfur clusters. In Haemophilus ducreyi (strain 35000HP / ATCC 700724), this protein is Glutaredoxin 4 (grxD).